A 339-amino-acid chain; its full sequence is UDP-N-acetylglucosamine--N-acetylmuramyl-(pentapeptide) pyrophosphoryl-undecaprenol N-acetylglucosamine transferase (339 aa).

UDP-N-acetyl-alpha-D-glucosamine contacts are provided by residues 10 to 12 (TGG), Asn124, Arg168, Ser188, Ile235, and Gln280.

It belongs to the glycosyltransferase 28 family. MurG subfamily.

It is found in the cell inner membrane. The enzyme catalyses di-trans,octa-cis-undecaprenyl diphospho-N-acetyl-alpha-D-muramoyl-L-alanyl-D-glutamyl-meso-2,6-diaminopimeloyl-D-alanyl-D-alanine + UDP-N-acetyl-alpha-D-glucosamine = di-trans,octa-cis-undecaprenyl diphospho-[N-acetyl-alpha-D-glucosaminyl-(1-&gt;4)]-N-acetyl-alpha-D-muramoyl-L-alanyl-D-glutamyl-meso-2,6-diaminopimeloyl-D-alanyl-D-alanine + UDP + H(+). It functions in the pathway cell wall biogenesis; peptidoglycan biosynthesis. Functionally, cell wall formation. Catalyzes the transfer of a GlcNAc subunit on undecaprenyl-pyrophosphoryl-MurNAc-pentapeptide (lipid intermediate I) to form undecaprenyl-pyrophosphoryl-MurNAc-(pentapeptide)GlcNAc (lipid intermediate II). In Pseudothermotoga lettingae (strain ATCC BAA-301 / DSM 14385 / NBRC 107922 / TMO) (Thermotoga lettingae), this protein is UDP-N-acetylglucosamine--N-acetylmuramyl-(pentapeptide) pyrophosphoryl-undecaprenol N-acetylglucosamine transferase.